Reading from the N-terminus, the 345-residue chain is UDP-N-acetylenolpyruvoylglucosamine reductase (345 aa).

The 204-residue stretch at 15-218 (VDVYAEKVII…NTIIFLRYKK (204 aa)) folds into the FAD-binding PCMH-type domain. Residue Arg-161 is part of the active site. Catalysis depends on Ser-230, which acts as the Proton donor. Glu-327 is a catalytic residue.

Belongs to the MurB family. It depends on FAD as a cofactor.

Its subcellular location is the cytoplasm. The catalysed reaction is UDP-N-acetyl-alpha-D-muramate + NADP(+) = UDP-N-acetyl-3-O-(1-carboxyvinyl)-alpha-D-glucosamine + NADPH + H(+). Its pathway is cell wall biogenesis; peptidoglycan biosynthesis. Functionally, cell wall formation. In Blochmanniella floridana, this protein is UDP-N-acetylenolpyruvoylglucosamine reductase.